A 536-amino-acid chain; its full sequence is MRILNYTIINLVISKSLLLNMNGIKKGIIHIIGIGGIGMSAIAEILHNSNYKVQGSDAQSNNNVDRLQKLGIEIYIGHNANNIKQAQVVVYSSAIKSDNVELVAARNNNKTILHRSGILAEIMKDKYVIAVSGSSGKTTTTAMIASIFDHSNTDATVIVGGILNSYQNNSKLGKSDILLIEADESDETMLKIPANIAVITSINNDHIDHYGTFDNIKNAFSQFINSADFAILPDSVGINDSESVSIKFGFEGVYPFVIQSPFVVPVHDIGIKKKKSASCSIKASNVKANNIRQHNNSIEFDVLIDGCSIDRSHWIPASCTETTAVLPLSSTQITSLRSRIIKNVVLSNAIGMHKVSNALAAISVAIKLGINDVDIKKGLLEFKGVARRFSLVADIKDVKLIEDYAHHPSEIQATLTAARSITKGKIIGIIEPFRFARIRNFFDEFIRIFMMFDYVILVPVHPPEDKPILGCRIDDIQEALISNGFNNVKIMNDALLISNFISDSTNSGDIVLFIGAGINVARLARETVVFMSGVEI.

133 to 139 (GSSGKTT) provides a ligand contact to ATP.

The protein belongs to the MurCDEF family.

The protein localises to the cytoplasm. The catalysed reaction is UDP-N-acetyl-alpha-D-muramate + L-alanine + ATP = UDP-N-acetyl-alpha-D-muramoyl-L-alanine + ADP + phosphate + H(+). Its pathway is cell wall biogenesis; peptidoglycan biosynthesis. Cell wall formation. This is UDP-N-acetylmuramate--L-alanine ligase from Wolbachia sp. subsp. Brugia malayi (strain TRS).